The following is a 397-amino-acid chain: Ribosomal RNA large subunit methyltransferase I (397 aa).

The 80-residue stretch at 2–81 (STTVYLQKDR…EQIDTEFFVR (80 aa)) folds into the PUA domain.

This sequence belongs to the methyltransferase superfamily. RlmI family.

It is found in the cytoplasm. It catalyses the reaction cytidine(1962) in 23S rRNA + S-adenosyl-L-methionine = 5-methylcytidine(1962) in 23S rRNA + S-adenosyl-L-homocysteine + H(+). In terms of biological role, specifically methylates the cytosine at position 1962 (m5C1962) of 23S rRNA. This is Ribosomal RNA large subunit methyltransferase I from Tolumonas auensis (strain DSM 9187 / NBRC 110442 / TA 4).